The chain runs to 149 residues: MHCPFCSTEETKVIDSRLVSEGYQVRRRRECGNCHERFTTFETAELIIPKVIKNDGTREPFNEEKLRRGIQHALEKRPVSENDVEKAISYIIHRLRSTGEREVPSKLVGTLVMEELKKLDKVAYIRFASVYLSFDDINQFSKEIEKLRD.

A zinc finger lies at 3–34 (CPFCSTEETKVIDSRLVSEGYQVRRRRECGNC). The ATP-cone domain occupies 49–139 (PKVIKNDGTR…VYLSFDDINQ (91 aa)).

The protein belongs to the NrdR family. The cofactor is Zn(2+).

Functionally, negatively regulates transcription of bacterial ribonucleotide reductase nrd genes and operons by binding to NrdR-boxes. The sequence is that of Transcriptional repressor NrdR from Pasteurella multocida (strain Pm70).